Here is a 117-residue protein sequence, read N- to C-terminus: Cytochrome c6 (117 aa).

Positions 1-24 (MKKLLAIALTVLATVFAFGTPAFA) are cleaved as a signal peptide. Residues cysteine 38, cysteine 41, histidine 42, and methionine 89 each contribute to the heme c site.

The protein belongs to the cytochrome c family. PetJ subfamily. As to quaternary structure, monomer. In terms of processing, binds 1 heme c group covalently per subunit.

It localises to the cellular thylakoid lumen. In terms of biological role, functions as an electron carrier between membrane-bound cytochrome b6-f and photosystem I in oxygenic photosynthesis. This chain is Cytochrome c6 (petJ), found in Picosynechococcus sp. (strain ATCC 27264 / PCC 7002 / PR-6) (Agmenellum quadruplicatum).